Consider the following 769-residue polypeptide: 5-methyltetrahydropteroyltriglutamate--homocysteine methyltransferase (769 aa).

Residues 16 to 19 (RELK) and lysine 118 contribute to the 5-methyltetrahydropteroyltri-L-glutamate site. L-homocysteine contacts are provided by residues 440-442 (IGS) and glutamate 493. L-methionine is bound by residues 440 to 442 (IGS) and glutamate 493. Residues 524–525 (RC) and tryptophan 570 contribute to the 5-methyltetrahydropteroyltri-L-glutamate site. Residue aspartate 608 participates in L-homocysteine binding. Aspartate 608 provides a ligand contact to L-methionine. 5-methyltetrahydropteroyltri-L-glutamate is bound at residue glutamate 614. Positions 650, 652, and 674 each coordinate Zn(2+). The Proton donor role is filled by histidine 706. Cysteine 738 serves as a coordination point for Zn(2+).

Belongs to the vitamin-B12 independent methionine synthase family. Requires Zn(2+) as cofactor.

It carries out the reaction 5-methyltetrahydropteroyltri-L-glutamate + L-homocysteine = tetrahydropteroyltri-L-glutamate + L-methionine. It participates in amino-acid biosynthesis; L-methionine biosynthesis via de novo pathway; L-methionine from L-homocysteine (MetE route): step 1/1. Catalyzes the transfer of a methyl group from 5-methyltetrahydrofolate to homocysteine resulting in methionine formation. The polypeptide is 5-methyltetrahydropteroyltriglutamate--homocysteine methyltransferase (Acidiphilium cryptum (strain JF-5)).